The chain runs to 337 residues: Mitochondrial metalloendopeptidase OMA1 (337 aa).

The Mitochondrial matrix portion of the chain corresponds to 1–68 (MFLNKYISNY…QPNPRDKRFQ (68 aa)). A helical transmembrane segment spans residues 69–89 (WIFGALIAGGGVYYFTHLEYV). Residues 90-337 (PISNRRRFND…MLQSFKEVHW (248 aa)) are Mitochondrial intermembrane-facing. His-195 provides a ligand contact to Zn(2+). Glu-196 is a catalytic residue. The Zn(2+) site is built by His-199 and Glu-250. A disulfide bond links Cys-265 and Cys-321.

The protein belongs to the peptidase M48 family. Zn(2+) serves as cofactor.

It is found in the mitochondrion inner membrane. Its activity is regulated as follows. Protease activity is induced in response to various mitochondrial stress. Protease that is part of the quality control system in the inner membrane of mitochondria. Cleaves and thereby promotes the turnover of mistranslated or misfolded membrane protein. The chain is Mitochondrial metalloendopeptidase OMA1 from Schizosaccharomyces pombe (strain 972 / ATCC 24843) (Fission yeast).